Here is a 203-residue protein sequence, read N- to C-terminus: Holliday junction branch migration complex subunit RuvA (203 aa).

The domain I stretch occupies residues 1 to 63; the sequence is MIFSVRGEVL…EDSMTLYGFS (63 aa). Positions 64-141 are domain II; it reads DAENRDLFLA…GPVGASGLTV (78 aa). Residues 141–145 are flexible linker; it reads VGTAA. A domain III region spans residues 146-203; it reads DGNAVRGSVVEALVGLGFAAKQAEEATDQVLDGELGKDGAVATSSALRAALSLLGKTR.

Belongs to the RuvA family. As to quaternary structure, homotetramer. Forms an RuvA(8)-RuvB(12)-Holliday junction (HJ) complex. HJ DNA is sandwiched between 2 RuvA tetramers; dsDNA enters through RuvA and exits via RuvB. An RuvB hexamer assembles on each DNA strand where it exits the tetramer. Each RuvB hexamer is contacted by two RuvA subunits (via domain III) on 2 adjacent RuvB subunits; this complex drives branch migration. In the full resolvosome a probable DNA-RuvA(4)-RuvB(12)-RuvC(2) complex forms which resolves the HJ.

The protein localises to the cytoplasm. In terms of biological role, the RuvA-RuvB-RuvC complex processes Holliday junction (HJ) DNA during genetic recombination and DNA repair, while the RuvA-RuvB complex plays an important role in the rescue of blocked DNA replication forks via replication fork reversal (RFR). RuvA specifically binds to HJ cruciform DNA, conferring on it an open structure. The RuvB hexamer acts as an ATP-dependent pump, pulling dsDNA into and through the RuvAB complex. HJ branch migration allows RuvC to scan DNA until it finds its consensus sequence, where it cleaves and resolves the cruciform DNA. The sequence is that of Holliday junction branch migration complex subunit RuvA from Mycobacterium leprae (strain Br4923).